The chain runs to 624 residues: MQTHSSSLVFLALLCLSWALLVSPTRPPSQPPSHPPIQPSSQPPTQPPSQPPTQPPTQPPSHPPTQPPTPPPSQSPSQPSPLPPNIACKSTPYPKLCRTILSAVKSSPSDPYHYGKFTMKQCLKQARRLSKVINRFAQRVEADPGTSTVEEVSAVADCGELAELSVEYLETVTEELKAAELMTAALVDRVTSLLGGVVTNQQTCLDGLVDAKSGFATAIGTPLGNLTRLYSVSLGLVSHALNRNLKRYKGSKGKIFGGGNKPVREPLETLIKVLRKTCDKGKDCRKANRNLGELGETSGGSILVREAVTVGPYETDNFPTITEAVAAAPNHTFPEQGYFVIYARAGLYEEYVVISNKKRNIMLIGDGINKTIISGNHSFIDGWTTYNSSTFAVVGDRFVAVDVTFRNTAGPEKHQAVAVRNNADGSTFYRCSFEGYQDTLYVHSLRQFYRECDIYGTIDFIFGNAAAIFQNCNIYARKPMANQKNAVTAHGRTDPNQKTGISIINCTIGAAPDLAADPKSTMTFLGRPWKPYSRTVYIQSYISDVVQPVGWLEWNGTTGLDTISYGEYDNFGPGADTSKRVQWSGYSLLNLVQAMNFTVYNFTLGDTWLPQTDIPFYGGLLHTE.

The first 19 residues, 1 to 19, serve as a signal peptide directing secretion; the sequence is MQTHSSSLVFLALLCLSWA. A disordered region spans residues 24–88; it reads PTRPPSQPPS…PSPLPPNIAC (65 aa). Over residues 25 to 84 the composition is skewed to pro residues; that stretch reads TRPPSQPPSHPPIQPSSQPPTQPPSQPPTQPPTQPPSHPPTQPPTPPPSQSPSQPSPLPP. The pectinesterase inhibitor 47 stretch occupies residues 74–236; that stretch reads QSPSQPSPLP…TRLYSVSLGL (163 aa). N-linked (GlcNAc...) asparagine glycans are attached at residues asparagine 225, asparagine 330, asparagine 369, and asparagine 376. The pectinesterase 47 stretch occupies residues 307–606; it reads AVTVGPYETD…FTVYNFTLGD (300 aa). Threonine 385 lines the substrate pocket. Asparagine 387 carries N-linked (GlcNAc...) asparagine glycosylation. A substrate-binding site is contributed by glutamine 415. Catalysis depends on aspartate 438, which acts as the Proton donor; for pectinesterase activity. Cysteines 452 and 472 form a disulfide. The Nucleophile; for pectinesterase activity role is filled by aspartate 459. An N-linked (GlcNAc...) asparagine glycan is attached at asparagine 505. Positions 527 and 529 each coordinate substrate. Residues asparagine 555, asparagine 596, and asparagine 601 are each glycosylated (N-linked (GlcNAc...) asparagine).

This sequence in the N-terminal section; belongs to the PMEI family. In the C-terminal section; belongs to the pectinesterase family.

Its subcellular location is the secreted. It is found in the cell wall. The catalysed reaction is [(1-&gt;4)-alpha-D-galacturonosyl methyl ester](n) + n H2O = [(1-&gt;4)-alpha-D-galacturonosyl](n) + n methanol + n H(+). It participates in glycan metabolism; pectin degradation; 2-dehydro-3-deoxy-D-gluconate from pectin: step 1/5. In terms of biological role, acts in the modification of cell walls via demethylesterification of cell wall pectin. The polypeptide is Probable pectinesterase/pectinesterase inhibitor 47 (PME47) (Arabidopsis thaliana (Mouse-ear cress)).